Consider the following 132-residue polypeptide: Holo-[acyl-carrier-protein] synthase (132 aa).

Residues D8 and E64 each contribute to the Mg(2+) site.

This sequence belongs to the P-Pant transferase superfamily. AcpS family. The cofactor is Mg(2+).

It is found in the cytoplasm. The catalysed reaction is apo-[ACP] + CoA = holo-[ACP] + adenosine 3',5'-bisphosphate + H(+). In terms of biological role, transfers the 4'-phosphopantetheine moiety from coenzyme A to a Ser of acyl-carrier-protein. This Shewanella sediminis (strain HAW-EB3) protein is Holo-[acyl-carrier-protein] synthase.